Consider the following 120-residue polypeptide: BolA-like protein 2 (120 aa).

Belongs to the BolA/IbaG family. As to quaternary structure, interacts with FRA1, GRX3 and GRX4.

Its subcellular location is the cytoplasm. It localises to the nucleus. Involved in the regulation of the iron regulon in response to decreased mitochondrial iron-sulfur cluster synthesis. May be involved in mitochondrial organization and biogenesis. The sequence is that of BolA-like protein 2 (BOL2) from Saccharomyces cerevisiae (strain ATCC 204508 / S288c) (Baker's yeast).